The chain runs to 617 residues: Zinc metalloproteinase nas-36 (617 aa).

Residues 1–22 form the signal peptide; the sequence is MRLCHSIILFNSLISISICSKA. The propeptide occupies 23–126; sequence DDPALLVASE…SKDKTKRLRR (104 aa). One can recognise a Peptidase M12A domain in the interval 127–322; sequence SFVSDKTATW…VATINTAYCK (196 aa). Intrachain disulfides connect Cys169-Cys321, Cys192-Cys211, Cys325-Cys346, Cys348-Cys357, Cys368-Cys397, Cys425-Cys445, Cys519-Cys550, Cys523-Cys555, and Cys535-Cys540. Residue Asn174 is glycosylated (N-linked (GlcNAc...) asparagine). Residue His219 participates in Zn(2+) binding. Residue Glu220 is part of the active site. Zn(2+) is bound by residues His223 and His229. In terms of domain architecture, EGF-like spans 317 to 358; the sequence is NTAYCKDECKSEKTKCENGGYMRPSKCSECLCPDGLGGEKCE. Positions 368-482 constitute a CUB domain; it reads CGGIIKLTEE…IGFKIQAKST (115 aa). Positions 507-556 constitute a TSP type-1 domain; the sequence is PNVWADWGEWSMCSRTCGGCGIRSRVRSCRSKKCEGRRQEFGTCNLKACP.

The cofactor is Zn(2+). In terms of tissue distribution, expressed in hypodermal cells. Also detected in the hypodermal seam cells in L4 larvae and young adults. In old adult hermaphrodites, it localizes to the vulva (at protein level).

It localises to the secreted. Metalloprotease. Involved in molting, a process during larval stages in which a new cuticle is formed and the old cuticle is shed. This chain is Zinc metalloproteinase nas-36 (nas-36), found in Caenorhabditis elegans.